We begin with the raw amino-acid sequence, 359 residues long: Phospho-N-acetylmuramoyl-pentapeptide-transferase (359 aa).

A run of 10 helical transmembrane segments spans residues 3-23 (QILF…PVLI), 53-73 (GGVA…LIGI), 84-104 (GLLV…DDFI), 117-137 (TAKL…ALQF), 156-176 (IATV…LVSA), 187-207 (LDGL…IITF), 231-251 (LALI…WNAA), 255-275 (IFMG…LSIT), 283-303 (VVIG…VAVF), and 330-350 (VIIR…ALFY).

Belongs to the glycosyltransferase 4 family. MraY subfamily. Requires Mg(2+) as cofactor.

Its subcellular location is the cell membrane. It carries out the reaction UDP-N-acetyl-alpha-D-muramoyl-L-alanyl-gamma-D-glutamyl-meso-2,6-diaminopimeloyl-D-alanyl-D-alanine + di-trans,octa-cis-undecaprenyl phosphate = di-trans,octa-cis-undecaprenyl diphospho-N-acetyl-alpha-D-muramoyl-L-alanyl-D-glutamyl-meso-2,6-diaminopimeloyl-D-alanyl-D-alanine + UMP. Its pathway is cell wall biogenesis; peptidoglycan biosynthesis. Catalyzes the initial step of the lipid cycle reactions in the biosynthesis of the cell wall peptidoglycan: transfers peptidoglycan precursor phospho-MurNAc-pentapeptide from UDP-MurNAc-pentapeptide onto the lipid carrier undecaprenyl phosphate, yielding undecaprenyl-pyrophosphoryl-MurNAc-pentapeptide, known as lipid I. This chain is Phospho-N-acetylmuramoyl-pentapeptide-transferase, found in Rhodococcus opacus (strain B4).